The primary structure comprises 360 residues: Autoinducer 2 import system permease protein LsrC (360 aa).

9 consecutive transmembrane segments (helical) span residues 18 to 38 (TALLAILALFALLGVIDRNYF), 45 to 65 (MIFSSAQILILLAIGATMVML), 76 to 96 (ITGLCAVTVGMALNAGFGLAL), 99 to 119 (LFALLVGMGAGFFNGILVTWL), 121 to 141 (IPAIVATLGTLGLYRGLMLLL), 161 to 181 (ILFSISPIGWLIMLLIVAMAL), 219 to 239 (MNGVMAALAGIVFASQIGFIP), 255 to 275 (VLGGISLLGGTGTIIGAILGA), and 290 to 310 (LPAWWNDFIAGLVLLGVLVFD). Residues 334–360 (VAPDKKVKSNNNKAPSSKSFTKKEVVR) form a disordered region. Over residues 342 to 352 (SNNNKAPSSKS) the composition is skewed to low complexity.

This sequence belongs to the binding-protein-dependent transport system permease family. AraH/RbsC subfamily. The complex is composed of two ATP-binding proteins (LsrA), two transmembrane proteins (LsrC and LsrD) and a solute-binding protein (LsrB).

It is found in the cell inner membrane. In terms of biological role, part of the ABC transporter complex LsrABCD involved in autoinducer 2 (AI-2) import. Probably responsible for the translocation of the substrate across the membrane. This is Autoinducer 2 import system permease protein LsrC (lsrC) from Yersinia enterocolitica serotype O:8 / biotype 1B (strain NCTC 13174 / 8081).